Consider the following 197-residue polypeptide: Imidazoleglycerol-phosphate dehydratase (197 aa).

This sequence belongs to the imidazoleglycerol-phosphate dehydratase family.

It localises to the cytoplasm. The enzyme catalyses D-erythro-1-(imidazol-4-yl)glycerol 3-phosphate = 3-(imidazol-4-yl)-2-oxopropyl phosphate + H2O. It functions in the pathway amino-acid biosynthesis; L-histidine biosynthesis; L-histidine from 5-phospho-alpha-D-ribose 1-diphosphate: step 6/9. The sequence is that of Imidazoleglycerol-phosphate dehydratase from Rhodopseudomonas palustris (strain BisA53).